The primary structure comprises 435 residues: Asparagine--tRNA ligase (435 aa).

The protein belongs to the class-II aminoacyl-tRNA synthetase family. In terms of assembly, homodimer.

It localises to the cytoplasm. It carries out the reaction tRNA(Asn) + L-asparagine + ATP = L-asparaginyl-tRNA(Asn) + AMP + diphosphate + H(+). In Leptospira borgpetersenii serovar Hardjo-bovis (strain JB197), this protein is Asparagine--tRNA ligase.